Reading from the N-terminus, the 76-residue chain is DNA polymerase III subunit theta (76 aa).

As to quaternary structure, the DNA polymerase holoenzyme is a complex that contains 10 different types of subunits. These subunits are organized into 3 functionally essential subassemblies: the pol III core, the beta sliding clamp processivity factor and the clamp-loading complex. The pol III core (subunits alpha,epsilon and theta) contains the polymerase and the 3'-5' exonuclease proofreading activities. The polymerase is tethered to the template via the sliding clamp processivity factor. The clamp-loading complex assembles the beta processivity factor onto the primer template and plays a central role in the organization and communication at the replication fork. This complex contains delta, delta', psi and chi, and copies of either or both of two different DnaX proteins, gamma and tau. The composition of the holoenzyme is, therefore: (alpha,epsilon,theta)[2]-(gamma/tau)[3]-delta,delta', psi,chi-beta[4].

It catalyses the reaction DNA(n) + a 2'-deoxyribonucleoside 5'-triphosphate = DNA(n+1) + diphosphate. Functionally, DNA polymerase III is a complex, multichain enzyme responsible for most of the replicative synthesis in bacteria. This DNA polymerase also exhibits 3' to 5' exonuclease activity. In terms of biological role, the exact function of the theta subunit is unknown. This Escherichia coli O157:H7 protein is DNA polymerase III subunit theta (holE).